The following is a 98-amino-acid chain: MEFKHVLMILGVIILTLAPLIMYSGLGEDEGYFGGADGAAGDLIMEISPNYEPWFEPFWEPPSGEIESLLFALQAAIGAIIIGYFFGYNKAKYDAKNQ.

2 helical membrane passes run 6–26 (VLMI…YSGL) and 68–88 (SLLF…FFGY).

Belongs to the CbiN family. In terms of assembly, forms an energy-coupling factor (ECF) transporter complex composed of an ATP-binding protein (A component, CbiO), a transmembrane protein (T component, CbiQ) and 2 possible substrate-capture proteins (S components, CbiM and CbiN) of unknown stoichimetry.

It is found in the cell membrane. Its pathway is cofactor biosynthesis; adenosylcobalamin biosynthesis. In terms of biological role, part of the energy-coupling factor (ECF) transporter complex CbiMNOQ involved in cobalt import. The sequence is that of Cobalt transport protein CbiN from Methanococcus maripaludis (strain DSM 14266 / JCM 13030 / NBRC 101832 / S2 / LL).